A 2605-amino-acid polypeptide reads, in one-letter code: Non-reducing polyketide synthase dbaI (2605 aa).

An N-terminal acylcarrier protein transacylase domain (SAT) region spans residues 97-243 (PNTLLIPLVM…PASEISDLHR (147 aa)). Cys144 acts as the Nucleophile; for transacylase activity in catalysis. The Proton donor/acceptor; for transacylase activity role is filled by His262. The Ketosynthase family 3 (KS3) domain occupies 382 to 798 (ENDIAVVGMS…GSNASIVVTQ (417 aa)). Residues Cys547, His682, and His721 each act as for beta-ketoacyl synthase activity in the active site. Residues 908–1195 (FGGQVSTFVG…VTNMASRALG (288 aa)) form a malonyl-CoA:ACP transacylase (MAT) domain region. The tract at residues 1285–1420 (PNTLLTFVGY…GRVIFRSISD (136 aa)) is N-terminal hotdog fold. Residues 1285–1596 (PNTLLTFVGY…YVKIPKASMS (312 aa)) form the PKS/mFAS DH domain. The product template (PT) domain stretch occupies residues 1316 to 1594 (LIRGHIIAQT…ISYVKIPKAS (279 aa)). The Proton acceptor; for dehydratase activity role is filled by His1320. The tract at residues 1447 to 1596 (EVDEVLQNRN…YVKIPKASMS (150 aa)) is C-terminal hotdog fold. Residue Asp1504 is the Proton donor; for dehydratase activity of the active site. The Carrier domain occupies 1665 to 1739 (GQLTQRIKSI…SLIKCVRKAM (75 aa)). Position 1699 is an O-(pantetheine 4'-phosphoryl)serine (Ser1699). The tract at residues 1742 to 1780 (DADSAEYTTEQSTSEAADSDDKSTNYTTPSTPGEEALDM) is disordered. Residues 1747 to 1757 (EYTTEQSTSEA) are compositionally biased toward polar residues. A methyltransferase domain region spans residues 1963–2151 (DWPLNRLFYR…VGYGHVDWTD (189 aa)). An NADPH-binding (R) domain region spans residues 2230 to 2473 (VTGATGSLGC…LSWTPVDVVA (244 aa)).

The enzyme catalyses 4 malonyl-CoA + acetyl-CoA + AH2 + S-adenosyl-L-methionine + 3 H(+) = 2,4-dihydroxy-3-methyl-6-(2-oxopropyl)benzaldehyde + A + S-adenosyl-L-homocysteine + 4 CO2 + 5 CoA + H2O. It functions in the pathway secondary metabolite biosynthesis. In terms of biological role, non-reducing polyketide synthase; part of the gene cluster that mediates the biosynthesis of the antibiotic 2,4-dihydroxy-3-methyl-6-(2-oxopropyl)benzaldehyde (DHMBA) and its derivatives. The direct non-reducing polyketide synthase dbaI product is 2,4-dihydroxy-3-methyl-6-(2-oxopropyl)benzaldehyde (DHMBA), produced by condensation of one acetyl-CoA starter unit with 4 malonyl-CoA units and one methylation step. The FAD-dependent monooxygenase dbaH is responsible for the synthesis of yellow pigments derived from the oxidation of DHMBA. The roles of dbaB, C, E and F have still to be determined. This Emericella nidulans (strain FGSC A4 / ATCC 38163 / CBS 112.46 / NRRL 194 / M139) (Aspergillus nidulans) protein is Non-reducing polyketide synthase dbaI.